The chain runs to 275 residues: 4-diphosphocytidyl-2-C-methyl-D-erythritol kinase (275 aa).

Lys15 is an active-site residue. Pro97–Ser107 is a binding site for ATP. Asp137 is an active-site residue.

It belongs to the GHMP kinase family. IspE subfamily.

The enzyme catalyses 4-CDP-2-C-methyl-D-erythritol + ATP = 4-CDP-2-C-methyl-D-erythritol 2-phosphate + ADP + H(+). The protein operates within isoprenoid biosynthesis; isopentenyl diphosphate biosynthesis via DXP pathway; isopentenyl diphosphate from 1-deoxy-D-xylulose 5-phosphate: step 3/6. In terms of biological role, catalyzes the phosphorylation of the position 2 hydroxy group of 4-diphosphocytidyl-2C-methyl-D-erythritol. The sequence is that of 4-diphosphocytidyl-2-C-methyl-D-erythritol kinase from Pseudothermotoga lettingae (strain ATCC BAA-301 / DSM 14385 / NBRC 107922 / TMO) (Thermotoga lettingae).